The sequence spans 625 residues: tRNA uridine 5-carboxymethylaminomethyl modification enzyme MnmG (625 aa).

FAD is bound by residues 13–18, valine 125, and serine 182; that span reads GGGHAG. Residue 276–290 coordinates NAD(+); it reads GPRYCPSIEDKITRF. Glutamine 373 lines the FAD pocket.

Belongs to the MnmG family. Homodimer. Heterotetramer of two MnmE and two MnmG subunits. Requires FAD as cofactor.

The protein resides in the cytoplasm. Its function is as follows. NAD-binding protein involved in the addition of a carboxymethylaminomethyl (cmnm) group at the wobble position (U34) of certain tRNAs, forming tRNA-cmnm(5)s(2)U34. In Lactococcus lactis subsp. cremoris (strain MG1363), this protein is tRNA uridine 5-carboxymethylaminomethyl modification enzyme MnmG.